A 191-amino-acid polypeptide reads, in one-letter code: MSEKKNKKEKLAEEIEQEELNSLDESVETVEEEATEETLTEEQAKILELENKLDEVENRYLRMQADFENVKKRHIADRDASQKYRSQSLAQDLLPALDSFEKALATTSDQEEVKQILKGMEMVYNQILVAFEKEGIEVIPAVGEQFDPNFHQAVMQDSDENAGSNEITAELQKGYKLKDRVIRPSMVKVNQ.

A compositionally biased stretch (basic and acidic residues) spans 1–13; it reads MSEKKNKKEKLAE. The tract at residues 1–40 is disordered; sequence MSEKKNKKEKLAEEIEQEELNSLDESVETVEEEATEETLT. Positions 14–40 are enriched in acidic residues; that stretch reads EIEQEELNSLDESVETVEEEATEETLT.

Belongs to the GrpE family. In terms of assembly, homodimer.

Its subcellular location is the cytoplasm. Functionally, participates actively in the response to hyperosmotic and heat shock by preventing the aggregation of stress-denatured proteins, in association with DnaK and GrpE. It is the nucleotide exchange factor for DnaK and may function as a thermosensor. Unfolded proteins bind initially to DnaJ; upon interaction with the DnaJ-bound protein, DnaK hydrolyzes its bound ATP, resulting in the formation of a stable complex. GrpE releases ADP from DnaK; ATP binding to DnaK triggers the release of the substrate protein, thus completing the reaction cycle. Several rounds of ATP-dependent interactions between DnaJ, DnaK and GrpE are required for fully efficient folding. This Listeria innocua serovar 6a (strain ATCC BAA-680 / CLIP 11262) protein is Protein GrpE.